We begin with the raw amino-acid sequence, 206 residues long: MKKLLCAVLLSPLLYSNAVLADDAKQLRETLNGTESLKADFKQTVTDINKKVIQTGAGVFALAHPNQFYWHLTAPDESQIVADGKDLWIYNPFAEEVVIMDFAEAINASPIALLVHRDDATWSQYSVTKKQDCYEIKPKSTDAGITSVNVCFNKGTLNKFNVLDDKGNLSQFDLSNQHSINAADKALFKFVLPENVDVDDQRLKTQ.

The first 21 residues, 1 to 21, serve as a signal peptide directing secretion; that stretch reads MKKLLCAVLLSPLLYSNAVLA.

It belongs to the LolA family. In terms of assembly, monomer.

The protein resides in the periplasm. Functionally, participates in the translocation of lipoproteins from the inner membrane to the outer membrane. Only forms a complex with a lipoprotein if the residue after the N-terminal Cys is not an aspartate (The Asp acts as a targeting signal to indicate that the lipoprotein should stay in the inner membrane). The sequence is that of Outer-membrane lipoprotein carrier protein from Shewanella sp. (strain MR-4).